Reading from the N-terminus, the 98-residue chain is NADH-ubiquinone oxidoreductase chain 4L (98 aa).

3 consecutive transmembrane segments (helical) span residues Met1 to Met21, Ala29 to Leu49, and Ile61 to Val81.

The protein belongs to the complex I subunit 4L family. In terms of assembly, core subunit of respiratory chain NADH dehydrogenase (Complex I) which is composed of 45 different subunits.

Its subcellular location is the mitochondrion inner membrane. The catalysed reaction is a ubiquinone + NADH + 5 H(+)(in) = a ubiquinol + NAD(+) + 4 H(+)(out). Its function is as follows. Core subunit of the mitochondrial membrane respiratory chain NADH dehydrogenase (Complex I) which catalyzes electron transfer from NADH through the respiratory chain, using ubiquinone as an electron acceptor. Part of the enzyme membrane arm which is embedded in the lipid bilayer and involved in proton translocation. The sequence is that of NADH-ubiquinone oxidoreductase chain 4L (MT-ND4L) from Balaenoptera borealis (Sei whale).